The primary structure comprises 595 residues: Aspartate--tRNA(Asp/Asn) ligase (595 aa).

An L-aspartate-binding site is contributed by Glu-171. The segment at 195–198 (QLFK) is aspartate. Residue Arg-217 coordinates L-aspartate. Residues 217–219 (RDE) and Gln-226 contribute to the ATP site. His-454 provides a ligand contact to L-aspartate. Glu-488 contacts ATP. Arg-495 provides a ligand contact to L-aspartate. 540 to 543 (GLDR) lines the ATP pocket.

This sequence belongs to the class-II aminoacyl-tRNA synthetase family. Type 1 subfamily. Homodimer.

Its subcellular location is the cytoplasm. The catalysed reaction is tRNA(Asx) + L-aspartate + ATP = L-aspartyl-tRNA(Asx) + AMP + diphosphate. Functionally, aspartyl-tRNA synthetase with relaxed tRNA specificity since it is able to aspartylate not only its cognate tRNA(Asp) but also tRNA(Asn). Reaction proceeds in two steps: L-aspartate is first activated by ATP to form Asp-AMP and then transferred to the acceptor end of tRNA(Asp/Asn). The chain is Aspartate--tRNA(Asp/Asn) ligase from Bordetella petrii (strain ATCC BAA-461 / DSM 12804 / CCUG 43448).